A 377-amino-acid polypeptide reads, in one-letter code: uncharacterized protein (377 aa).

Residues 309-375 (NIISVDKIKE…ISNLNKKLKK (67 aa)) are a coiled coil.

The protein belongs to the mimivirus L5 family.

This is an uncharacterized protein from Acanthamoeba polyphaga (Amoeba).